The sequence spans 492 residues: Catalase isozyme 1 (492 aa).

Residues His65 and Asn138 contribute to the active site. Tyr348 is a binding site for heme.

This sequence belongs to the catalase family. Homotetramer. It depends on heme as a cofactor. In terms of tissue distribution, scutella, milky endosperm of immature kernels, leaves and epicotyls.

It is found in the peroxisome. The catalysed reaction is 2 H2O2 = O2 + 2 H2O. Occurs in almost all aerobically respiring organisms and serves to protect cells from the toxic effects of hydrogen peroxide. This Zea mays (Maize) protein is Catalase isozyme 1 (CAT1).